The primary structure comprises 556 residues: Arginine--tRNA ligase (556 aa).

Positions 132–142 (ANPTGDLHLGH) match the 'HIGH' region motif.

The protein belongs to the class-I aminoacyl-tRNA synthetase family. In terms of assembly, monomer.

The protein localises to the cytoplasm. It carries out the reaction tRNA(Arg) + L-arginine + ATP = L-arginyl-tRNA(Arg) + AMP + diphosphate. The chain is Arginine--tRNA ligase from Listeria monocytogenes serovar 1/2a (strain ATCC BAA-679 / EGD-e).